Reading from the N-terminus, the 200-residue chain is Cysteine dioxygenase type 1 (200 aa).

Residues histidine 86, histidine 88, and histidine 140 each coordinate Fe cation. A cross-link (3'-(S-cysteinyl)-tyrosine (Cys-Tyr)) is located at residues 93 to 157 (CFLKLLQGNL…TEPAVSLHLY (65 aa)).

It belongs to the cysteine dioxygenase family. Monomer. Requires Fe(2+) as cofactor. Ni(2+) serves as cofactor. It depends on Zn(2+) as a cofactor. In terms of processing, the thioether cross-link between Cys-93 and Tyr-157 plays a structural role through stabilizing the Fe(2+) ion, and prevents the production of highly damaging free hydroxyl radicals by holding the oxygen radical via hydroxyl hydrogen. As to expression, highest expression in liver. Also expressed in kidney, lung, brain and small intestine.

It carries out the reaction L-cysteine + O2 = 3-sulfino-L-alanine + H(+). It functions in the pathway organosulfur biosynthesis; taurine biosynthesis; hypotaurine from L-cysteine: step 1/2. Functionally, catalyzes the oxidation of cysteine to cysteine sulfinic acid with addition of molecular dioxygen. The chain is Cysteine dioxygenase type 1 (Cdo1) from Mus musculus (Mouse).